The sequence spans 644 residues: Pentatricopeptide repeat-containing protein At1g12775, mitochondrial (644 aa).

A mitochondrion-targeting transit peptide spans 1–53 (MVRMMIRRLSSQASRFVQPRLLETGTLRIALINCPNELLFCCERGFSTFSDRN). PPR repeat units lie at residues 87–121 (TVID…GIAH), 122–156 (SIYT…GYEP), 157–191 (DTVI…GHKP), 192–226 (TLIT…GFQP), 227–261 (NEVT…NIKL), 262–296 (DAVK…GFKA), 297–331 (DIIT…KISP), 332–366 (NVVT…GIAP), 367–401 (NTIT…GCDP), 402–436 (DIMT…GVIA), 437–471 (NTVT…RVRP), 472–506 (DIVS…KMEL), 507–541 (DIGI…GVKL), 542–576 (DARA…GHAP), and 577–611 (DELT…GFPA).

The protein belongs to the PPR family. P subfamily.

It localises to the mitochondrion. This Arabidopsis thaliana (Mouse-ear cress) protein is Pentatricopeptide repeat-containing protein At1g12775, mitochondrial.